A 740-amino-acid polypeptide reads, in one-letter code: Elongation factor 2 (740 aa).

A tr-type G domain is found at 23-264 (AQIRNAGTLA…MIIEHIPPPN (242 aa)). GTP contacts are provided by residues 32-39 (AHVDHGKT), 98-102 (DTPGH), and 152-155 (NKID). A Diphthamide modification is found at histidine 605.

Belongs to the TRAFAC class translation factor GTPase superfamily. Classic translation factor GTPase family. EF-G/EF-2 subfamily.

The protein localises to the cytoplasm. Its function is as follows. Catalyzes the GTP-dependent ribosomal translocation step during translation elongation. During this step, the ribosome changes from the pre-translocational (PRE) to the post-translocational (POST) state as the newly formed A-site-bound peptidyl-tRNA and P-site-bound deacylated tRNA move to the P and E sites, respectively. Catalyzes the coordinated movement of the two tRNA molecules, the mRNA and conformational changes in the ribosome. This is Elongation factor 2 from Pyrobaculum aerophilum (strain ATCC 51768 / DSM 7523 / JCM 9630 / CIP 104966 / NBRC 100827 / IM2).